The chain runs to 233 residues: MPKHSKRYLEARKFVDRTKYYDLDEAIELVKKTATAKFDETIELHIQTGIDYRKPEQHIRGTVVLPHGTGKEVRVLVFAKGEAAKEALEAGADYVGAEDLVEKIEKEGFLDFDVAIATPDMMRVIGRLGKILGPRGLMPSPKSGTVTQEVAEAVKEFKKGRIEVRTDKTGNIHIPVGKRSFDNEKLKENIISAVRQIMQMKPAGVKGQFIKKAVLSSTMGPGIKLNLQSLLKE.

The protein belongs to the universal ribosomal protein uL1 family. In terms of assembly, part of the 50S ribosomal subunit.

Binds directly to 23S rRNA. The L1 stalk is quite mobile in the ribosome, and is involved in E site tRNA release. Its function is as follows. Protein L1 is also a translational repressor protein, it controls the translation of the L11 operon by binding to its mRNA. This is Large ribosomal subunit protein uL1 from Thermotoga petrophila (strain ATCC BAA-488 / DSM 13995 / JCM 10881 / RKU-1).